Consider the following 137-residue polypeptide: Large ribosomal subunit protein uL16 (137 aa).

The protein belongs to the universal ribosomal protein uL16 family. As to quaternary structure, part of the 50S ribosomal subunit.

Functionally, binds 23S rRNA and is also seen to make contacts with the A and possibly P site tRNAs. This is Large ribosomal subunit protein uL16 from Francisella tularensis subsp. tularensis (strain FSC 198).